We begin with the raw amino-acid sequence, 105 residues long: Large ribosomal subunit protein eL30 (105 aa).

Belongs to the eukaryotic ribosomal protein eL30 family.

This Methanococcus vannielii (strain ATCC 35089 / DSM 1224 / JCM 13029 / OCM 148 / SB) protein is Large ribosomal subunit protein eL30 (rpl30e).